A 217-amino-acid polypeptide reads, in one-letter code: Monomethylamine corrinoid protein 2 (217 aa).

One can recognise a B12-binding N-terminal domain in the interval 1–91 (MTNTEIFDKL…ELEKNKKEGD (91 aa)). The region spanning 93–217 (AGLAITFVAE…AAKVALEVMK (125 aa)) is the B12-binding domain. H106 is a binding site for methylcob(III)alamin.

It belongs to the methylamine corrinoid protein family. Can form a complex with MtmB.

The protein operates within one-carbon metabolism; methanogenesis from methylamine. In terms of biological role, acts as a methyl group carrier between MtmB and MtbA. The protein is Monomethylamine corrinoid protein 2 (mtmC2) of Methanosarcina barkeri.